Reading from the N-terminus, the 793-residue chain is Protocadherin beta-7 (793 aa).

The first 26 residues, 1-26, serve as a signal peptide directing secretion; the sequence is MEARVERAVQKRQVLFLCVFLGMSWA. Residues 27–688 lie on the Extracellular side of the membrane; the sequence is GAEPLRYFVA…DQANSLTVYL (662 aa). 5 Cadherin domains span residues 35–133, 138–242, 247–347, 352–451, and 456–561; these read VAEE…APVF, ISLK…APDF, YKVQ…RPEL, LTSP…APAF, and YTLF…SPFV. A glycan (N-linked (GlcNAc...) asparagine) is linked at asparagine 169. N-linked (GlcNAc...) asparagine glycosylation is found at asparagine 418 and asparagine 436. Asparagine 567 carries an N-linked (GlcNAc...) asparagine glycan. The Cadherin 6 domain maps to 568–671; sequence SSAPCTEPLP…LVDGFSQPYL (104 aa). A helical transmembrane segment spans residues 689-709; that stretch reads VVALASVSSLFLLSVLLFVAV. Topologically, residues 710 to 793 are cytoplasmic; sequence RLCRRSRAAP…NRPFQNNLGF (84 aa).

The protein localises to the cell membrane. Its function is as follows. Potential calcium-dependent cell-adhesion protein. May be involved in the establishment and maintenance of specific neuronal connections in the brain. In Homo sapiens (Human), this protein is Protocadherin beta-7 (PCDHB7).